We begin with the raw amino-acid sequence, 588 residues long: Aspartate--tRNA ligase (588 aa).

Residue Glu174 participates in L-aspartate binding. Residues 198–201 (QLFK) form an aspartate region. Arg220 is an L-aspartate binding site. ATP contacts are provided by residues 220–222 (RDE) and Gln229. Residue His448 coordinates L-aspartate. Glu482 lines the ATP pocket. L-aspartate is bound at residue Arg489. 534 to 537 (GIDR) is a binding site for ATP.

Belongs to the class-II aminoacyl-tRNA synthetase family. Type 1 subfamily. In terms of assembly, homodimer.

The protein resides in the cytoplasm. The enzyme catalyses tRNA(Asp) + L-aspartate + ATP = L-aspartyl-tRNA(Asp) + AMP + diphosphate. In terms of biological role, catalyzes the attachment of L-aspartate to tRNA(Asp) in a two-step reaction: L-aspartate is first activated by ATP to form Asp-AMP and then transferred to the acceptor end of tRNA(Asp). In Xanthomonas oryzae pv. oryzae (strain MAFF 311018), this protein is Aspartate--tRNA ligase.